Consider the following 676-residue polypeptide: UvrABC system protein B (676 aa).

In terms of domain architecture, Helicase ATP-binding spans 26-414 (EGLDAGLAHQ…SAGEIADQVV (389 aa)). 39–46 (GVTGSGKT) lines the ATP pocket. The Beta-hairpin motif lies at 92-115 (YYDYYQPEAYVPTTDTFIEKDSSV). Residues 432 to 598 (QVDDLLSEIR…ALKRNIKDIM (167 aa)) enclose the Helicase C-terminal domain. Positions 636 to 671 (EKEITKLEAQMYKHAQDLEFELAAQKRDEIEKLRQQ) constitute a UVR domain.

The protein belongs to the UvrB family. As to quaternary structure, forms a heterotetramer with UvrA during the search for lesions. Interacts with UvrC in an incision complex.

It localises to the cytoplasm. Functionally, the UvrABC repair system catalyzes the recognition and processing of DNA lesions. A damage recognition complex composed of 2 UvrA and 2 UvrB subunits scans DNA for abnormalities. Upon binding of the UvrA(2)B(2) complex to a putative damaged site, the DNA wraps around one UvrB monomer. DNA wrap is dependent on ATP binding by UvrB and probably causes local melting of the DNA helix, facilitating insertion of UvrB beta-hairpin between the DNA strands. Then UvrB probes one DNA strand for the presence of a lesion. If a lesion is found the UvrA subunits dissociate and the UvrB-DNA preincision complex is formed. This complex is subsequently bound by UvrC and the second UvrB is released. If no lesion is found, the DNA wraps around the other UvrB subunit that will check the other stand for damage. This is UvrABC system protein B from Vibrio vulnificus (strain CMCP6).